Reading from the N-terminus, the 196-residue chain is Gastrula zinc finger protein xLCGF3.1 (196 aa).

C2H2-type zinc fingers lie at residues 6-28 (FMCTKCGKCLSTKQKLNLHHMTH), 34-56 (FTCTECGKGFSRNDYLKIHQTIH), 62-84 (FTCIECGKGFSINRTLKLHYMTH), 90-112 (FTCTECSKGFSTKRDLEIHQTMH), 118-140 (LTCTECSKGFSTKHKLSIHQRVH), 146-168 (FTCTECNKGFSRNDHLQIHQTVH), and 174-196 (FTCTECSKCFSRKELLKIHQIVH).

This sequence belongs to the krueppel C2H2-type zinc-finger protein family.

It localises to the nucleus. Its function is as follows. May be involved in transcriptional regulation. The chain is Gastrula zinc finger protein xLCGF3.1 from Xenopus laevis (African clawed frog).